A 429-amino-acid polypeptide reads, in one-letter code: C4-dicarboxylate transport protein (429 aa).

Transmembrane regions (helical) follow at residues 9 to 29 (VLYV…HYYP), 45 to 65 (LIKM…IAGM), 79 to 99 (LLYF…ATHI), 149 to 169 (GEIL…AHLG), 185 to 205 (VLFG…FGAM), 223 to 243 (LIGT…GAIA), 308 to 328 (IYMT…LTWM), and 356 to 376 (AATL…ILGI).

The protein belongs to the dicarboxylate/amino acid:cation symporter (DAACS) (TC 2.A.23) family.

It localises to the cell inner membrane. Functionally, responsible for the transport of dicarboxylates such as succinate, fumarate, and malate from the periplasm across the membrane. The polypeptide is C4-dicarboxylate transport protein (Burkholderia multivorans (strain ATCC 17616 / 249)).